The sequence spans 379 residues: Peritrophin-48 (379 aa).

A signal peptide spans 1 to 20; the sequence is MKAKTLTATLALILLAFAQA. Chitin-binding type-2 domains are found at residues 25 to 83 and 86 to 143; these read ASYC…NCFF and ANPC…NTGN. 2 cysteine pairs are disulfide-bonded: cysteine 60–cysteine 73 and cysteine 120–cysteine 133. N-linked (GlcNAc...) asparagine glycosylation is found at asparagine 150 and asparagine 168. 3 consecutive Chitin-binding type-2 domains span residues 151–208, 224–283, and 285–356; these read LSVC…ACSR, TSPC…RTLK, and CNRC…ACEN. The cysteines at positions 185 and 198 are disulfide-linked. N-linked (GlcNAc...) asparagine glycosylation is found at asparagine 247 and asparagine 252. A disulfide bond links cysteine 324 and cysteine 337. N-linked (GlcNAc...) asparagine glycans are attached at residues asparagine 341, asparagine 356, and asparagine 373.

Glycosylated. In terms of tissue distribution, larval peritrophic membrane.

Its function is as follows. Binds chitin and may bind related oligosaccharide structures. This is Peritrophin-48 from Chrysomya bezziana (Old world screw-worm fly).